Reading from the N-terminus, the 233-residue chain is Sugar fermentation stimulation protein homolog (233 aa).

This sequence belongs to the SfsA family.

This is Sugar fermentation stimulation protein homolog from Teredinibacter turnerae (strain ATCC 39867 / T7901).